The following is a 131-amino-acid chain: Small ribosomal subunit protein uS8 (131 aa).

Belongs to the universal ribosomal protein uS8 family. Part of the 30S ribosomal subunit. Contacts proteins S5 and S12.

Functionally, one of the primary rRNA binding proteins, it binds directly to 16S rRNA central domain where it helps coordinate assembly of the platform of the 30S subunit. The sequence is that of Small ribosomal subunit protein uS8 from Sulfurimonas denitrificans (strain ATCC 33889 / DSM 1251) (Thiomicrospira denitrificans (strain ATCC 33889 / DSM 1251)).